The following is a 387-amino-acid chain: Arginine biosynthesis bifunctional protein ArgJ 2 (387 aa).

6 residues coordinate substrate: T147, K169, T180, E259, N382, and T387. The active-site Nucleophile is the T180.

It belongs to the ArgJ family. As to quaternary structure, heterotetramer of two alpha and two beta chains.

It is found in the cytoplasm. It carries out the reaction N(2)-acetyl-L-ornithine + L-glutamate = N-acetyl-L-glutamate + L-ornithine. It catalyses the reaction L-glutamate + acetyl-CoA = N-acetyl-L-glutamate + CoA + H(+). Its pathway is amino-acid biosynthesis; L-arginine biosynthesis; L-ornithine and N-acetyl-L-glutamate from L-glutamate and N(2)-acetyl-L-ornithine (cyclic): step 1/1. It participates in amino-acid biosynthesis; L-arginine biosynthesis; N(2)-acetyl-L-ornithine from L-glutamate: step 1/4. Functionally, catalyzes two activities which are involved in the cyclic version of arginine biosynthesis: the synthesis of N-acetylglutamate from glutamate and acetyl-CoA as the acetyl donor, and of ornithine by transacetylation between N(2)-acetylornithine and glutamate. In Nostoc sp. (strain PCC 7120 / SAG 25.82 / UTEX 2576), this protein is Arginine biosynthesis bifunctional protein ArgJ 2.